A 190-amino-acid polypeptide reads, in one-letter code: Holliday junction branch migration complex subunit RuvA (190 aa).

Residues Met-1–Ala-65 are domain I. The interval Asn-66 to Leu-137 is domain II. A flexible linker region spans residues Leu-137–Ala-141. A domain III region spans residues Ala-142–Lys-190.

The protein belongs to the RuvA family. Homotetramer. Forms an RuvA(8)-RuvB(12)-Holliday junction (HJ) complex. HJ DNA is sandwiched between 2 RuvA tetramers; dsDNA enters through RuvA and exits via RuvB. An RuvB hexamer assembles on each DNA strand where it exits the tetramer. Each RuvB hexamer is contacted by two RuvA subunits (via domain III) on 2 adjacent RuvB subunits; this complex drives branch migration. In the full resolvosome a probable DNA-RuvA(4)-RuvB(12)-RuvC(2) complex forms which resolves the HJ.

Its subcellular location is the cytoplasm. Functionally, the RuvA-RuvB-RuvC complex processes Holliday junction (HJ) DNA during genetic recombination and DNA repair, while the RuvA-RuvB complex plays an important role in the rescue of blocked DNA replication forks via replication fork reversal (RFR). RuvA specifically binds to HJ cruciform DNA, conferring on it an open structure. The RuvB hexamer acts as an ATP-dependent pump, pulling dsDNA into and through the RuvAB complex. HJ branch migration allows RuvC to scan DNA until it finds its consensus sequence, where it cleaves and resolves the cruciform DNA. This chain is Holliday junction branch migration complex subunit RuvA, found in Anaplasma marginale (strain Florida).